Here is a 423-residue protein sequence, read N- to C-terminus: tRNA(Ile2) 2-agmatinylcytidine synthetase TiaS (423 aa).

Residues 273-347 constitute a DNA-binding region (OB); the sequence is VIVYGRVVEE…GINIEKIKIL (75 aa).

This sequence belongs to the TiaS family.

Its subcellular location is the cytoplasm. It catalyses the reaction cytidine(34) in tRNA(Ile2) + agmatine + ATP + H2O = 2-agmatinylcytidine(34) in tRNA(Ile2) + AMP + 2 phosphate + 2 H(+). In terms of biological role, ATP-dependent agmatine transferase that catalyzes the formation of 2-agmatinylcytidine (agm2C) at the wobble position (C34) of tRNA(Ile2), converting the codon specificity from AUG to AUA. In Methanocaldococcus jannaschii (strain ATCC 43067 / DSM 2661 / JAL-1 / JCM 10045 / NBRC 100440) (Methanococcus jannaschii), this protein is tRNA(Ile2) 2-agmatinylcytidine synthetase TiaS.